A 371-amino-acid chain; its full sequence is Archaeal glycosylation protein Q (371 aa).

A disordered region spans residues 19–39 (QRSDGSMPAGHNGPYHDPETP).

The protein resides in the cytoplasm. The protein operates within cell surface structure biogenesis; S-layer biogenesis. Functionally, putative isomerase involved in the N-glycosylation pathway. Required for the appearance of the methyl ester of hexuronic acid found at position four of the pentasaccharide N-linked to the S-layer glycoprotein. Either involved in preparing the third sugar for attachment of the fourth pentasaccharide subunit or processing the fourth sugar prior to its addition to the lipid-linked trisaccharide. In Haloferax volcanii (strain ATCC 29605 / DSM 3757 / JCM 8879 / NBRC 14742 / NCIMB 2012 / VKM B-1768 / DS2) (Halobacterium volcanii), this protein is Archaeal glycosylation protein Q (aglQ).